Reading from the N-terminus, the 161-residue chain is Cytochrome c-type biogenesis protein CcmE (161 aa).

The Cytoplasmic segment spans residues Met1–Arg8. The chain crosses the membrane as a helical; Signal-anchor for type II membrane protein span at residues Leu9–Ala29. Residues Leu30–Tyr161 are Periplasmic-facing. Heme contacts are provided by His131 and Tyr135.

Belongs to the CcmE/CycJ family.

The protein resides in the cell inner membrane. Its function is as follows. Heme chaperone required for the biogenesis of c-type cytochromes. Transiently binds heme delivered by CcmC and transfers the heme to apo-cytochromes in a process facilitated by CcmF and CcmH. This chain is Cytochrome c-type biogenesis protein CcmE, found in Shewanella loihica (strain ATCC BAA-1088 / PV-4).